A 554-amino-acid chain; its full sequence is Glutamine--tRNA ligase (554 aa).

The 'HIGH' region signature appears at 34-44 (PEPNGYLHIGH). ATP is bound by residues 35–37 (EPN) and 41–47 (HIGHAKS). 2 residues coordinate L-glutamine: aspartate 67 and tyrosine 212. ATP is bound by residues threonine 231, 261–262 (RL), and 269–271 (MSK). Residues 268–272 (VMSKR) carry the 'KMSKS' region motif. Positions 317-324 (TKQDNTIE) are interaction with tRNA.

Belongs to the class-I aminoacyl-tRNA synthetase family. In terms of assembly, monomer.

The protein localises to the cytoplasm. It catalyses the reaction tRNA(Gln) + L-glutamine + ATP = L-glutaminyl-tRNA(Gln) + AMP + diphosphate. The protein is Glutamine--tRNA ligase of Escherichia coli (strain 55989 / EAEC).